Reading from the N-terminus, the 548-residue chain is Membrane protein insertase YidC (548 aa).

Helical transmembrane passes span Asn6–Asp26, Asn357–Thr377, Leu424–Leu444, Phe455–Met475, and Pro503–Val523.

Belongs to the OXA1/ALB3/YidC family. Type 1 subfamily. Interacts with the Sec translocase complex via SecD. Specifically interacts with transmembrane segments of nascent integral membrane proteins during membrane integration.

It is found in the cell inner membrane. Functionally, required for the insertion and/or proper folding and/or complex formation of integral membrane proteins into the membrane. Involved in integration of membrane proteins that insert both dependently and independently of the Sec translocase complex, as well as at least some lipoproteins. Aids folding of multispanning membrane proteins. The sequence is that of Membrane protein insertase YidC from Aeromonas hydrophila subsp. hydrophila (strain ATCC 7966 / DSM 30187 / BCRC 13018 / CCUG 14551 / JCM 1027 / KCTC 2358 / NCIMB 9240 / NCTC 8049).